A 141-amino-acid polypeptide reads, in one-letter code: Deoxyuridine 5'-triphosphate nucleotidohydrolase (141 aa).

The protein belongs to the dUTPase family. The cofactor is Mg(2+).

It carries out the reaction dUTP + H2O = dUMP + diphosphate + H(+). The protein operates within pyrimidine metabolism; dUMP biosynthesis; dUMP from dCTP (dUTP route): step 2/2. Its function is as follows. This enzyme is involved in nucleotide metabolism: it produces dUMP, the immediate precursor of thymidine nucleotides and it decreases the intracellular concentration of dUTP so that uracil cannot be incorporated into DNA. This is Deoxyuridine 5'-triphosphate nucleotidohydrolase from Chlorella (PBCV-1).